The chain runs to 176 residues: Envelope protein 167 (176 aa).

Residue Met1 is a topological domain, intravirion. A helical transmembrane segment spans residues 2-22 (YLVLLIAIILFITIILVIFLI). Topologically, residues 23-176 (SGLFYPEQNP…AVMAIPRKVL (154 aa)) are virion surface.

It belongs to the asfivirus envelope protein p22 family.

Its subcellular location is the virion membrane. It localises to the host cell membrane. The chain is Envelope protein 167 from African swine fever virus (isolate Warthog/Namibia/Wart80/1980) (ASFV).